The following is a 398-amino-acid chain: Argininosuccinate synthase (398 aa).

Position 8-16 (8-16) interacts with ATP; it reads AYSGGLDTT. Residue tyrosine 87 coordinates L-citrulline. Glycine 117 contacts ATP. Residues threonine 119, asparagine 123, and aspartate 124 each contribute to the L-aspartate site. Residue asparagine 123 coordinates L-citrulline. The L-citrulline site is built by arginine 127, serine 175, glutamate 259, and tyrosine 271.

Belongs to the argininosuccinate synthase family. Type 1 subfamily. In terms of assembly, homotetramer.

The protein localises to the cytoplasm. It carries out the reaction L-citrulline + L-aspartate + ATP = 2-(N(omega)-L-arginino)succinate + AMP + diphosphate + H(+). The protein operates within amino-acid biosynthesis; L-arginine biosynthesis; L-arginine from L-ornithine and carbamoyl phosphate: step 2/3. This is Argininosuccinate synthase from Corynebacterium jeikeium (strain K411).